The sequence spans 421 residues: D-inositol 3-phosphate glycosyltransferase (421 aa).

Residue His13 participates in 1D-myo-inositol 3-phosphate binding. Residues 19–20 and Gly27 contribute to the UDP-N-acetyl-alpha-D-glucosamine site; that span reads QP. Residues 24–29, Lys82, Tyr115, Thr139, and Arg159 each bind 1D-myo-inositol 3-phosphate; that span reads DAGGMN. Positions 233, 238, and 294 each coordinate UDP-N-acetyl-alpha-D-glucosamine. Mg(2+) is bound by residues Phe303, Arg304, and Ala306. Residues Glu316 and Glu324 each contribute to the UDP-N-acetyl-alpha-D-glucosamine site. Mg(2+) is bound at residue Thr330.

The protein belongs to the glycosyltransferase group 1 family. MshA subfamily. As to quaternary structure, homodimer.

It carries out the reaction 1D-myo-inositol 3-phosphate + UDP-N-acetyl-alpha-D-glucosamine = 1D-myo-inositol 2-acetamido-2-deoxy-alpha-D-glucopyranoside 3-phosphate + UDP + H(+). In terms of biological role, catalyzes the transfer of a N-acetyl-glucosamine moiety to 1D-myo-inositol 3-phosphate to produce 1D-myo-inositol 2-acetamido-2-deoxy-glucopyranoside 3-phosphate in the mycothiol biosynthesis pathway. This Arthrobacter sp. (strain FB24) protein is D-inositol 3-phosphate glycosyltransferase.